Here is a 209-residue protein sequence, read N- to C-terminus: Uracil phosphoribosyltransferase (209 aa).

Residues arginine 77, arginine 102, and 129–137 (DPMLATGVS) each bind 5-phospho-alpha-D-ribose 1-diphosphate. Residues isoleucine 192 and 197-199 (GDA) each bind uracil. Aspartate 198 provides a ligand contact to 5-phospho-alpha-D-ribose 1-diphosphate.

The protein belongs to the UPRTase family. The cofactor is Mg(2+).

It carries out the reaction UMP + diphosphate = 5-phospho-alpha-D-ribose 1-diphosphate + uracil. Its pathway is pyrimidine metabolism; UMP biosynthesis via salvage pathway; UMP from uracil: step 1/1. Allosterically activated by GTP. Functionally, catalyzes the conversion of uracil and 5-phospho-alpha-D-ribose 1-diphosphate (PRPP) to UMP and diphosphate. This Metamycoplasma arthritidis (strain 158L3-1) (Mycoplasma arthritidis) protein is Uracil phosphoribosyltransferase.